The sequence spans 277 residues: Phycobilisome rod-core linker polypeptide CpcG1 (277 aa).

The region spanning 11–189 (RTLDQRVVSY…YWRNKEISLS (179 aa)) is the PBS-linker domain.

The protein belongs to the phycobilisome linker protein family. As to quaternary structure, the phycobilisome is a hemidiscoidal structure that is composed of two distinct substructures: a core complex and a number of rods radiating from the core.

The protein localises to the cellular thylakoid membrane. Functionally, rod-core linker protein required for attachment of phycocyanin to allophycocyanin in cores of phycobilisomes. Linker polypeptides determine the state of aggregation and the location of the disk-shaped phycobiliprotein units within the phycobilisome and modulate their spectroscopic properties in order to mediate a directed and optimal energy transfer. The protein is Phycobilisome rod-core linker polypeptide CpcG1 (cpcG1) of Thermosynechococcus vestitus (strain NIES-2133 / IAM M-273 / BP-1).